Consider the following 234-residue polypeptide: Sugar fermentation stimulation protein homolog (234 aa).

Belongs to the SfsA family.

The protein is Sugar fermentation stimulation protein homolog of Pectobacterium carotovorum subsp. carotovorum (strain PC1).